A 735-amino-acid polypeptide reads, in one-letter code: Catalase-peroxidase (735 aa).

Residues Trp95 to Tyr223 constitute a cross-link (tryptophyl-tyrosyl-methioninium (Trp-Tyr) (with M-249)). Residue His96 is the Proton acceptor of the active site. Positions Tyr223–Met249 form a cross-link, tryptophyl-tyrosyl-methioninium (Tyr-Met) (with W-95). A heme b-binding site is contributed by His264.

It belongs to the peroxidase family. Peroxidase/catalase subfamily. In terms of assembly, homodimer or homotetramer. It depends on heme b as a cofactor. Post-translationally, formation of the three residue Trp-Tyr-Met cross-link is important for the catalase, but not the peroxidase activity of the enzyme.

It carries out the reaction H2O2 + AH2 = A + 2 H2O. The catalysed reaction is 2 H2O2 = O2 + 2 H2O. Functionally, bifunctional enzyme with both catalase and broad-spectrum peroxidase activity. The chain is Catalase-peroxidase from Aliarcobacter butzleri (strain RM4018) (Arcobacter butzleri).